The primary structure comprises 618 residues: Matrix metalloproteinase-24 (618 aa).

Positions 1 to 41 (MPRSRGGRAAPGQAARWSGWRAPGRLLPLLPALCCLAAAAG) are cleaved as a signal peptide. A propeptide spanning residues 42-128 (AGKPAGADAP…HLSRRRRNKR (87 aa)) is cleaved from the precursor. At 42–575 (AGKPAGADAP…IDDVPGSVNA (534 aa)) the chain is on the extracellular side. Positions 110–117 (PRCGVPDH) match the Cysteine switch motif. The Zn(2+) site is built by Cys112 and His255. Glu256 is an active-site residue. Positions 259 and 265 each coordinate Zn(2+). The disordered stretch occupies residues 296-352 (QKIYGPPAEPLEPTRPLPTLPVRRIHSPSERKHERQPRPPRPPLGDRPSTPGAKPNI). Residues 302-314 (PAEPLEPTRPLPT) show a composition bias toward pro residues. A compositionally biased stretch (basic and acidic residues) spans 322 to 332 (SPSERKHERQP). 4 Hemopexin repeats span residues 350–398 (PNIC…WKGL), 399–444 (PARI…GSCL), 446–494 (REGI…KGIP), and 495–542 (QAPQ…WMGC). Cys353 and Cys542 are joined by a disulfide. The chain crosses the membrane as a helical span at residues 576 to 596 (VAVVVPCTLSLCLLVLLYTIF). The Cytoplasmic portion of the chain corresponds to 597-618 (QFKNKTGPQPVTYYKRPVQEWV). Residues 616–618 (EWV) carry the PDZ-binding motif.

Belongs to the peptidase M10A family. Interacts (via PDZ-binding motif) with APBA3 (via PDZ domain). Interacts with GRIP1 and GRIP2. It depends on Zn(2+) as a cofactor. The cofactor is Ca(2+). Post-translationally, cleaved by a furin endopeptidase in the trans-Golgi network. As to expression, predominantly expressed in the nervous system: while enriched in the central nervous system, expression is also detected in the peripheral nervous system, including the trigeminal ganglion. Expression is not restricted to the nervous system: it is also enriched in the thymus, with a lower level of expression present in the aorta. In brain, high expression is present in the brain parenchyma, particularly within the neocortex.

The protein resides in the cell membrane. The protein localises to the golgi apparatus. Its subcellular location is the trans-Golgi network membrane. It localises to the secreted. It is found in the extracellular space. The protein resides in the extracellular matrix. In terms of biological role, metalloprotease that mediates cleavage of N-cadherin (CDH2) and acts as a regulator of neuro-immune interactions and neural stem cell quiescence. Involved in cell-cell interactions between nociceptive neurites and mast cells, possibly by mediating cleavage of CDH2, thereby acting as a mediator of peripheral thermal nociception and inflammatory hyperalgesia. Key regulator of neural stem cells quiescence by mediating cleavage of CDH2, affecting CDH2-mediated anchorage of neural stem cells to ependymocytes in the adult subependymal zone, leading to modulate their quiescence. May play a role in axonal growth. Able to activate progelatinase A. May also be a proteoglycanase involved in degradation of proteoglycans, such as dermatan sulfate and chondroitin sulfate proteoglycans. Cleaves partially fibronectin, but not collagen type I, nor laminin. The polypeptide is Matrix metalloproteinase-24 (Mmp24) (Rattus norvegicus (Rat)).